A 475-amino-acid chain; its full sequence is Adenosylhomocysteinase (475 aa).

Substrate contacts are provided by Thr-60, Asp-133, and Glu-198. 199–201 (TTT) contributes to the NAD(+) binding site. Residues Lys-228 and Asp-232 each coordinate substrate. Residues Asn-233, 262–267 (GYGDVG), Glu-285, Asn-320, 341–343 (IGH), and Asn-389 contribute to the NAD(+) site.

Belongs to the adenosylhomocysteinase family. Requires NAD(+) as cofactor.

It is found in the cytoplasm. The enzyme catalyses S-adenosyl-L-homocysteine + H2O = L-homocysteine + adenosine. Its pathway is amino-acid biosynthesis; L-homocysteine biosynthesis; L-homocysteine from S-adenosyl-L-homocysteine: step 1/1. Its function is as follows. May play a key role in the regulation of the intracellular concentration of adenosylhomocysteine. This Syntrophotalea carbinolica (strain DSM 2380 / NBRC 103641 / GraBd1) (Pelobacter carbinolicus) protein is Adenosylhomocysteinase.